Reading from the N-terminus, the 32-residue chain is Protamine-2 (32 aa).

The interval 1 to 32 (PRRRRSSSRPVRRRRARRVSRRRRRRGGRRRR) is disordered.

In terms of tissue distribution, testis.

It localises to the nucleus. The protein resides in the chromosome. In terms of biological role, protamines substitute for histones in the chromatin of sperm during the haploid phase of spermatogenesis. They compact sperm DNA into a highly condensed, stable and inactive complex. The polypeptide is Protamine-2 (Oncorhynchus mykiss (Rainbow trout)).